Here is a 518-residue protein sequence, read N- to C-terminus: Nicotine N-demethylase CYP82E3 (518 aa).

The chain crosses the membrane as a helical span at residues 2–22 (VFPVEAIVGLVTFTFLFYFLW). K254 participates in a covalent cross-link: Glycyl lysine isopeptide (Lys-Gly) (interchain with G-Cter in ubiquitin). Residue C458 participates in heme binding.

Belongs to the cytochrome P450 family. CYP82E2 subfamily. Heme is required as a cofactor. In terms of tissue distribution, expressed in leaves.

It localises to the membrane. It carries out the reaction (S)-nicotine + reduced [NADPH--hemoprotein reductase] + O2 = (S)-nornicotine + formaldehyde + oxidized [NADPH--hemoprotein reductase] + H2O + H(+). It participates in alkaloid biosynthesis; nicotine biosynthesis. In terms of biological role, involved in the biosynthesis of pyridine alkaloid natural products, leading mainly to the production of anabasine, anatabine, nicotine and nornicotine, effective deterrents against herbivores with antiparasitic and pesticide properties (neurotoxins); nornicotine serves as the precursor in the synthesis of the carcinogen compound N'-nitrosonornicotine (NNN). Catalyzes the demethylation of nicotine to form nornicotine. The chain is Nicotine N-demethylase CYP82E3 from Nicotiana tomentosiformis (Tobacco).